Reading from the N-terminus, the 175-residue chain is Transcriptional repressor NrdR (175 aa).

A zinc finger lies at 3–32 (CPYCSHPDSKVIDSRDVDDGVRRRRECVVC). The region spanning 47–137 (LFVVKKDQRR…VYREFTDITQ (91 aa)) is the ATP-cone domain.

The protein belongs to the NrdR family. Requires Zn(2+) as cofactor.

Its function is as follows. Negatively regulates transcription of bacterial ribonucleotide reductase nrd genes and operons by binding to NrdR-boxes. The chain is Transcriptional repressor NrdR from Dehalococcoides mccartyi (strain ATCC BAA-2100 / JCM 16839 / KCTC 5957 / BAV1).